The following is a 233-amino-acid chain: uncharacterized protein (233 aa).

Belongs to the LutC/YkgG family.

This is an uncharacterized protein from Neisseria meningitidis serogroup B (strain ATCC BAA-335 / MC58).